Here is a 253-residue protein sequence, read N- to C-terminus: MPFEFIDAAHAGQAGSDPLQDELALLDLAAQGRQVAQLWEAPLSLVVPRTYLRHAALETARADFAQQGCPVFLRMSGGGLVPQGPGILNLSLAYTVEQPPGARSDAVYLHLCEVIGDALQSLGVDTHWQAVAGSFCDGRYNLAWGPPEAARKIAGTAQYWRRAPAAMQTADGQRHLVLAHAVLLVSAGPVQINARANAFEAAIDSGRHYDAGKVVSVREALLASGRAVDDDAALMAQVSDALRRSVGQTPPPA.

The 207-residue stretch at 30-236 (AQGRQVAQLW…AVDDDAALMA (207 aa)) folds into the BPL/LPL catalytic domain.

This is an uncharacterized protein from Cupriavidus necator (strain ATCC 17699 / DSM 428 / KCTC 22496 / NCIMB 10442 / H16 / Stanier 337) (Ralstonia eutropha).